A 54-amino-acid polypeptide reads, in one-letter code: Ovomucoid (54 aa).

The Kazal-like domain occupies valine 4 to cysteine 54. 3 disulfides stabilise this stretch: cysteine 6–cysteine 36, cysteine 14–cysteine 33, and cysteine 22–cysteine 54. The N-linked (GlcNAc...) asparagine glycan is linked to asparagine 43.

The protein resides in the secreted. The sequence is that of Ovomucoid from Coloeus monedula (Eurasian jackdaw).